A 336-amino-acid polypeptide reads, in one-letter code: IgLON family member 5 (336 aa).

An N-terminal signal peptide occupies residues M1–S30. Ig-like C2-type domains follow at residues L33 to T122, P132 to T213, and P218 to L307. N41, N49, N67, and N137 each carry an N-linked (GlcNAc...) asparagine glycan. C54 and C112 form a disulfide bridge. Intrachain disulfides connect C154-C195 and C238-C291. A glycan (N-linked (GlcNAc...) asparagine) is linked at N288.

Belongs to the immunoglobulin superfamily. IgLON family.

It localises to the secreted. In Mus musculus (Mouse), this protein is IgLON family member 5 (Iglon5).